The primary structure comprises 660 residues: E3 ubiquitin-protein ligase ORTHRUS 3 (660 aa).

The segment at 12–63 (EGVCMRCKSMPPPEESLTCGTCVTPWHVSCLLSPPETLSATLQWLCPDCSGE) adopts a PHD-type zinc-finger fold. The interval 107 to 129 (QLLSGKGVVDEDDEEEKKKTSKG) is disordered. An RING-type 1 zinc finger spans residues 141-197 (CSFCMQSLQKPVSVRVLFALALMLVWFLESTPCGHNACLKCFLKWMGQGHRSCGTCR). Residues 285–434 (VRNQGLLVGE…CRFLFVRCDN (150 aa)) enclose the YDG domain. An RING-type 2 zinc finger spans residues 528–585 (CQICQKVMTNPVTTPCAHNFCKACLESKFAGTALVRERGSGGRKLRSQKSVMKCPCCP). Residues 593–622 (QNPQVNREVAEVIEKLKKQEEEENAKSLDE) are a coiled coil. 2 stretches are compositionally biased toward basic and acidic residues: residues 610 to 621 (KQEEEENAKSLD) and 637 to 646 (QPKKRIKLDT). Residues 610 to 660 (KQEEEENAKSLDEGQCSGTSHEEEDDEQPKKRIKLDTDAEVSATVVESDMK) form a disordered region.

It is found in the nucleus. It catalyses the reaction S-ubiquitinyl-[E2 ubiquitin-conjugating enzyme]-L-cysteine + [acceptor protein]-L-lysine = [E2 ubiquitin-conjugating enzyme]-L-cysteine + N(6)-ubiquitinyl-[acceptor protein]-L-lysine.. It participates in protein modification; protein ubiquitination. E3 ubiquitin-protein ligase. May participate in CpG methylation-dependent transcriptional regulation. This chain is E3 ubiquitin-protein ligase ORTHRUS 3 (ORTH3), found in Arabidopsis thaliana (Mouse-ear cress).